Consider the following 239-residue polypeptide: Phosphoribosylaminoimidazole-succinocarboxamide synthase (239 aa).

It belongs to the SAICAR synthetase family.

It carries out the reaction 5-amino-1-(5-phospho-D-ribosyl)imidazole-4-carboxylate + L-aspartate + ATP = (2S)-2-[5-amino-1-(5-phospho-beta-D-ribosyl)imidazole-4-carboxamido]succinate + ADP + phosphate + 2 H(+). It functions in the pathway purine metabolism; IMP biosynthesis via de novo pathway; 5-amino-1-(5-phospho-D-ribosyl)imidazole-4-carboxamide from 5-amino-1-(5-phospho-D-ribosyl)imidazole-4-carboxylate: step 1/2. The chain is Phosphoribosylaminoimidazole-succinocarboxamide synthase from Bacillus cereus (strain B4264).